Reading from the N-terminus, the 194-residue chain is Calcium channel flower (194 aa).

Transmembrane regions (helical) follow at residues L35 to I55, I66 to E88, and G107 to F127.

It belongs to the calcium channel flower family. In terms of assembly, homomultimer. Associates with the dally/ magu complex.

It localises to the cell membrane. The protein resides in the cytoplasmic vesicle. Its subcellular location is the secretory vesicle. It is found in the synaptic vesicle membrane. The protein localises to the presynaptic cell membrane. It localises to the endosome. Its activity is regulated as follows. Channel activity is inhibited by La(3+), which reduces Ca(2+) influx and thus inhibits it's function in promoting activity-dependent bulk endocytosis (ADBE) in response to high stimuli. Its function is as follows. Transmembrane protein which mediates synaptic endocytosis, fitness-based cell culling, neuronal culling, morphogen gradient scaling, and calcium transport. Regulates synaptic endocytosis and hence couples exo- with endocytosis. Controls two major modes of synaptic vesicle (SV) endocytosis in the synaptic boutons of neuromuscular junctions (NMJs); Ca(2+) channel-independent Clathrin-mediated endocytosis (CME) in response to mild stimulation, and Ca(2+) channel-dependent activity-dependent bulk endocytosis (ADBE) in response to strong stimulation. Functions in ADBE and subsequent SV reformation from bulk endosomes by initiating Ca(2+) channel-dependent phosphatidylinositol 4,5-bisphosphate (PtdIns(4,5)P2) compartmentalization in synaptic boutons. There it acts at the periactive zone to provide the low Ca(2+) levels required to initiate Calcineurin activation and upregulate PtdIns(4,5)P2. Conversely PtdIns(4,5)P2 enhances fwe Ca(2+) channel-activity, establishing a positive feedback loop that induces PtdIns(4,5)P2 microdomain at the periactive zone. These microdomains trigger bulk membrane invagination (i.e. ADBE) by triggering actin polymerization while also promoting localization of fwe to bulk endosomes, thereby removing the ADBE trigger to reduce endocytosis and prevent excess membrane uptake. PtdIns(4,5)P2 then promotes SV reformation from the bulk endosomes, to coordinate ADBE and subsequent SV reformation. Different combinations of the flower isoforms at the cell membrane are also required for the identification and elimination of suboptimal or supernumerary cells during development, regeneration, and adulthood. Required for the recognition and elimination of unfit cells in the developing wing during cell competition. In the developing pupal retina, mediates the elimination of unwanted postmitotic neurons, including supernumerary photoreceptor neurons that form at the periphery of the retina and are contained within incomplete ommatidia units. Also required for efficient elimination and replacement of old neurons by newly generated neurons during regeneration in the adult brain following mechanical injury. Downstream of the flower fitness fingerprints, cells identified as unwanted or unfit are eliminated via apoptosis through the expression of ahuizotl (azot). However, the cells marked for elimination by the flower isoforms only undergo apoptosis if additional thresholds are met; (1) their neighboring fit/healthy cells express different levels of the fwe isoforms, and (2) the levels of the protective signal SPARC expressed by the loser or unwanted cells are unable to inhibit caspase activation. These additional thresholds for flower-mediated apoptosis, allows useful cells to recover from transient and limited stress before they are unnecessarily eliminated. Functions with dally and magu in a mechanism of scaling, which utilises apoptosis to ensure that the dpp morphogen gradient, which mediates organ growth, remains proportional to the size of the growing wing. In this mechanism, fwe represses dally- and Magu-dependent activity in expanding the gradient, and dally/Magu inhibits fwe-dependent apoptosis to keep cell death rate low. When the levels of these different proteins are optimally regulated the gradient correctly scales with organ growth but when this fails, fwe-mediated apoptosis is activated to trim the developing tissue to match the correct size of the gradient. The sequence is that of Calcium channel flower from Drosophila sechellia (Fruit fly).